Here is a 250-residue protein sequence, read N- to C-terminus: MTGTSILQFPVLSEGVLLKRYKRFLADVELKDGQVVTVHCANTGPMKGVLHPGGRVRVRHAPSPKRKLAWTWEQAEIPSSDGTLCWAGINTALPNKLIRALIEAGGLKDQLGPIKTIRAEVPYGLNRRSRIDLLLTPDDSADDQRPIYVEVKNTTWSHGDVALFPDTVTERGQKHLEELTALLPDARGVLVPCLSRPDVIAFAPGDSADPRYGDLFRQAMAAGVEVLPCCFSFYEDQIQWEGVRTVCPRL.

This sequence belongs to the SfsA family.

The polypeptide is Sugar fermentation stimulation protein homolog (Synechococcus sp. (strain CC9311)).